The sequence spans 667 residues: MSELLLELFSEEIPAFMQKNAEKGYLNVFTKIFEENKIFAKVKVFVGPRRITLHATHLPKVTLPKDTAIKGPSLNASEAAINGFCKAHNVSKLELFTKLINNQLYYFFIKKTEEREIKEILPEIIIEAINKYSWTKSMFWGDYNIKWVRPLRNILCIFDGEILPMQFGHLTANNITYGHRLTDNKKIEVENFEDYKNKLSENHVILERTKREEIIKAGLLELANSHDLTIKEDNRLIEEVSGLTEFPVVLLGRIPLKFLELPKEVLISSMRRHQKYFCLFDKAGNFAPYFLFVSNGRFVNAELVIKGNEKVLAARLADALYFYKQDIAKTLESNLSKLLAVTFHVKLGNLREKVDRITNICNYIAPNNKDLIMAAKLCKSDLVSEMVGEFPDLQGIMGYYYAKHDGLDEEVATAIKDHYKPQGLSDNVPNGNAALLATADKIDSLVGLMIAGEAPTGSGDPYALRRQALGIIRIIIENKLELNLNDLINFSINLYKDSSDKNKDLIISFLKERIKFYFKNNYDISLINAVLDLSAEDLVSVSLKLNTLQKFLAEDAGKQLLNAYKRASNIIGDQKITGLVDGNLFTTQSEKELFAVMQKILPQIIDSITDKDYERVLNLLSSLLAPITSFFGNVLVNDPDPKIVQNRLSLLQNTCELFHKIAKFNRL.

The protein belongs to the class-II aminoacyl-tRNA synthetase family. Tetramer of two alpha and two beta subunits.

It is found in the cytoplasm. It catalyses the reaction tRNA(Gly) + glycine + ATP = glycyl-tRNA(Gly) + AMP + diphosphate. The polypeptide is Glycine--tRNA ligase beta subunit (Rickettsia canadensis (strain McKiel)).